The sequence spans 160 residues: Transcription elongation factor GreA (160 aa).

Positions 12–76 (EGVKKLEEEL…QLENMLKNAS (65 aa)) form a coiled coil.

The protein belongs to the GreA/GreB family.

Functionally, necessary for efficient RNA polymerase transcription elongation past template-encoded arresting sites. The arresting sites in DNA have the property of trapping a certain fraction of elongating RNA polymerases that pass through, resulting in locked ternary complexes. Cleavage of the nascent transcript by cleavage factors such as GreA or GreB allows the resumption of elongation from the new 3'terminus. GreA releases sequences of 2 to 3 nucleotides. This is Transcription elongation factor GreA from Clostridium botulinum (strain Hall / ATCC 3502 / NCTC 13319 / Type A).